A 540-amino-acid chain; its full sequence is MRVNNGLTPQELEAYGISDVHDIVYNPSYDLLYQEELDPSLTGYERGVLTNLGAVAVDTGIFTGRSPKDKYIVRDDTTRDTFWWADKGKGKNDNKPLSPETWQHLKGLVTKQLSGKRLFVVDAFCGANPDTRLSVRFITEVAWQAHFVKNMFIRPSDEELAGFKPDFIVMNGAKCTNPQWKEQRLNSENFVAFNLTERMQLIGGTWYGGEMKKGMFSMMNYLLPLKGIASMHCSANVGEKGDVAVFFGLSGTGKTTLSTDPKRRLIGDDEHGWDDDGVFNFEGGCYAKTIKLSKEAEPEIYNAIRRDALLENVTVREDGTIDFDDGSKTENTRVSYPIYHIDNIVKPVSKAGHATKVIFLTADAFGVLPPVSRLTADQTQYHFLSGFTAKLAGTERGITEPTPTFSACFGAAFLSLHPTQYAEVLVKRMQAAGAQAYLVNTGWNGTGKRISIKDTRAIIDAILNGSLDNAETFTLPMFNLAIPTELPGVDTKILDPRNTYASPEQWQEKAETLAKLFIDNFDKYTDTPAGAALVAAGPKL.

Position 65 (R65) interacts with substrate. Residue K87 is modified to N6-acetyllysine. Substrate is bound by residues Y207 and K213. Residues K213, H232, and 248 to 256 each bind ATP; that span reads GLSGTGKTT. Residues K213 and H232 each contribute to the Mn(2+) site. Residue D269 coordinates Mn(2+). Residues E297, R333, 449 to 450, and T455 contribute to the ATP site; that span reads RI. Residue R333 participates in substrate binding. Position 523 is an N6-acetyllysine (K523).

The protein belongs to the phosphoenolpyruvate carboxykinase (ATP) family. As to quaternary structure, monomer. The cofactor is Mn(2+).

The protein resides in the cytoplasm. The enzyme catalyses oxaloacetate + ATP = phosphoenolpyruvate + ADP + CO2. Its pathway is carbohydrate biosynthesis; gluconeogenesis. Functionally, involved in the gluconeogenesis. Catalyzes the conversion of oxaloacetate (OAA) to phosphoenolpyruvate (PEP) through direct phosphoryl transfer between the nucleoside triphosphate and OAA. The polypeptide is Phosphoenolpyruvate carboxykinase (ATP) (Shigella dysenteriae serotype 1 (strain Sd197)).